A 629-amino-acid chain; its full sequence is Ras GTPase-activating protein gap-1 (629 aa).

Residues 183–398 (DRIRPVLSSL…SVMASFLDNI (216 aa)) form the Ras-GAP domain. The PH domain occupies 411-507 (TVFKFGNLQQ…WLNAIERQRN (97 aa)).

Its subcellular location is the cytoplasm. In terms of biological role, GTPase-activating protein, which inhibits the vulval induction by acting as a negative regulator for the member of the Ras family let-60. Probably decreases the signaling activity of Ras by stimulating its intrinsic GTPase activity, thereby lowering the levels of GTP-bound, active Ras. In Caenorhabditis elegans, this protein is Ras GTPase-activating protein gap-1 (gap-1).